The primary structure comprises 446 residues: Signal recognition particle protein (446 aa).

GTP is bound by residues 106–113 (GLQGSGKT), 188–192 (DTAGR), and 246–249 (SKLD).

It belongs to the GTP-binding SRP family. SRP54 subfamily. As to quaternary structure, part of the signal recognition particle protein translocation system, which is composed of SRP and FtsY.

Its subcellular location is the cytoplasm. It carries out the reaction GTP + H2O = GDP + phosphate + H(+). Its function is as follows. Involved in targeting and insertion of nascent membrane proteins into the cytoplasmic membrane. Binds to the hydrophobic signal sequence of the ribosome-nascent chain (RNC) as it emerges from the ribosomes. The SRP-RNC complex is then targeted to the cytoplasmic membrane where it interacts with the SRP receptor FtsY. The polypeptide is Signal recognition particle protein (Mycoplasma genitalium (strain ATCC 33530 / DSM 19775 / NCTC 10195 / G37) (Mycoplasmoides genitalium)).